Consider the following 178-residue polypeptide: UPF0228 protein MA_4223 (178 aa).

The protein belongs to the UPF0228 family.

In Methanosarcina acetivorans (strain ATCC 35395 / DSM 2834 / JCM 12185 / C2A), this protein is UPF0228 protein MA_4223.